The primary structure comprises 725 residues: Malate synthase G 2 (725 aa).

Residues V118, 125–126 (RY), S276, and R313 each bind acetyl-CoA. The Proton acceptor role is filled by R340. Residues R340, E429, and 454-457 (GFLD) each bind glyoxylate. Mg(2+)-binding residues include E429 and D457. Residue P538 coordinates acetyl-CoA. At C619 the chain carries Cysteine sulfenic acid (-SOH). The active-site Proton donor is D633.

The protein belongs to the malate synthase family. GlcB subfamily. As to quaternary structure, monomer. Mg(2+) is required as a cofactor.

The protein localises to the cytoplasm. It catalyses the reaction glyoxylate + acetyl-CoA + H2O = (S)-malate + CoA + H(+). The protein operates within carbohydrate metabolism; glyoxylate cycle; (S)-malate from isocitrate: step 2/2. Functionally, involved in the glycolate utilization. Catalyzes the condensation and subsequent hydrolysis of acetyl-coenzyme A (acetyl-CoA) and glyoxylate to form malate and CoA. The polypeptide is Malate synthase G 2 (Pseudomonas syringae pv. tomato (strain ATCC BAA-871 / DC3000)).